Reading from the N-terminus, the 172-residue chain is Adenine phosphoribosyltransferase (172 aa).

Belongs to the purine/pyrimidine phosphoribosyltransferase family. As to quaternary structure, homodimer.

It is found in the cytoplasm. The enzyme catalyses AMP + diphosphate = 5-phospho-alpha-D-ribose 1-diphosphate + adenine. It participates in purine metabolism; AMP biosynthesis via salvage pathway; AMP from adenine: step 1/1. Its function is as follows. Catalyzes a salvage reaction resulting in the formation of AMP, that is energically less costly than de novo synthesis. This is Adenine phosphoribosyltransferase from Streptococcus agalactiae serotype III (strain NEM316).